The following is a 283-amino-acid chain: MSQKIILNNSYSITKSHLFHIVDPSPWPVLTSFALLLLVIGGVSFMHGYKFNIYILSAGIISVGYCLYSWWRDIVKEGIVEHQHTSPVRKGLQIGMALFILTEIVFFGVFFASFFKSSLSPVGLLDGVWVVKQGIWPPPTIKTFEPFDIPFINTLILLLSGTTVTWAHYALEEKNQKDCVTALALTILLGIFFTTMQAYEYYHAAFKFTDGIYASNFYLATGFHGAHVIIGTIFLIICYFRAKRGDFTTEGNGHLGFECAAWYWHFVDVVWLFLFTFVYIFGS.

The next 6 membrane-spanning stretches (helical) occupy residues 26–46, 51–71, 94–114, 179–199, 217–237, and 261–281; these read PWPV…VSFM, FNIY…YSWW, IGMA…FASF, CVTA…MQAY, FYLA…FLII, and AWYW…VYIF.

It belongs to the cytochrome c oxidase subunit 3 family.

It localises to the cell membrane. It carries out the reaction 4 Fe(II)-[cytochrome c] + O2 + 8 H(+)(in) = 4 Fe(III)-[cytochrome c] + 2 H2O + 4 H(+)(out). This chain is Probable cytochrome c oxidase subunit 3 (ctaE), found in Rickettsia conorii (strain ATCC VR-613 / Malish 7).